The following is a 411-amino-acid chain: LL-diaminopimelate aminotransferase (411 aa).

Residues Tyr-15 and Gly-42 each contribute to the substrate site. Residues Tyr-72, 108-109 (SK), Tyr-132, Asn-187, Tyr-218, and 246-248 (SFS) each bind pyridoxal 5'-phosphate. Residues Lys-109, Tyr-132, and Asn-187 each coordinate substrate. Lys-249 is subject to N6-(pyridoxal phosphate)lysine. Residues Arg-257 and Asn-292 each contribute to the pyridoxal 5'-phosphate site. Substrate-binding residues include Asn-292 and Arg-388.

Belongs to the class-I pyridoxal-phosphate-dependent aminotransferase family. LL-diaminopimelate aminotransferase subfamily. As to quaternary structure, homodimer. Pyridoxal 5'-phosphate is required as a cofactor.

It catalyses the reaction (2S,6S)-2,6-diaminopimelate + 2-oxoglutarate = (S)-2,3,4,5-tetrahydrodipicolinate + L-glutamate + H2O + H(+). Its pathway is amino-acid biosynthesis; L-lysine biosynthesis via DAP pathway; LL-2,6-diaminopimelate from (S)-tetrahydrodipicolinate (aminotransferase route): step 1/1. In terms of biological role, involved in the synthesis of meso-diaminopimelate (m-DAP or DL-DAP), required for both lysine and peptidoglycan biosynthesis. Catalyzes the direct conversion of tetrahydrodipicolinate to LL-diaminopimelate. This Cyanothece sp. (strain PCC 7425 / ATCC 29141) protein is LL-diaminopimelate aminotransferase.